A 151-amino-acid polypeptide reads, in one-letter code: uncharacterized protein (151 aa).

A disordered region spans residues methionine 1 to arginine 151. A compositionally biased stretch (low complexity) spans serine 33–serine 45. The segment covering arginine 53–arginine 64 has biased composition (basic residues). Over residues serine 108–serine 123 the composition is skewed to low complexity. Residues alanine 126–proline 141 show a composition bias toward basic and acidic residues.

This is an uncharacterized protein from Aotus trivirgatus (Three-striped night monkey).